Here is a 476-residue protein sequence, read N- to C-terminus: Methylenetetrahydrofolate--tRNA-(uracil-5-)-methyltransferase TrmFO (476 aa).

13–18 contacts FAD; sequence GGGLAG. Residues 425-446 are disordered; it reads PPLESPPTHGADGKKLRGPDKT. The segment covering 435 to 446 has biased composition (basic and acidic residues); sequence ADGKKLRGPDKT.

It belongs to the MnmG family. TrmFO subfamily. FAD serves as cofactor.

Its subcellular location is the cytoplasm. It carries out the reaction uridine(54) in tRNA + (6R)-5,10-methylene-5,6,7,8-tetrahydrofolate + NADH + H(+) = 5-methyluridine(54) in tRNA + (6S)-5,6,7,8-tetrahydrofolate + NAD(+). It catalyses the reaction uridine(54) in tRNA + (6R)-5,10-methylene-5,6,7,8-tetrahydrofolate + NADPH + H(+) = 5-methyluridine(54) in tRNA + (6S)-5,6,7,8-tetrahydrofolate + NADP(+). Catalyzes the folate-dependent formation of 5-methyl-uridine at position 54 (M-5-U54) in all tRNAs. This chain is Methylenetetrahydrofolate--tRNA-(uracil-5-)-methyltransferase TrmFO, found in Rhodopseudomonas palustris (strain BisB18).